Consider the following 320-residue polypeptide: Polyprenal reductase 1 (320 aa).

The next 6 membrane-spanning stretches (helical) occupy residues 5 to 25 (IVWL…LPLV), 64 to 84 (FFGH…AATW), 143 to 163 (MHIL…LSLC), 200 to 220 (PLMK…WGWI), 243 to 263 (IIPY…AEIV), and 266 to 286 (LGLL…FGFV).

It belongs to the steroid 5-alpha reductase family. Polyprenal reductase subfamily. Expressed in roots and flowers.

The protein localises to the cell membrane. It carries out the reaction a di-trans,poly-cis-dolichal + NADP(+) = a di-trans,poly-cis-polyprenal + NADPH + H(+). It functions in the pathway protein modification; protein glycosylation. In terms of biological role, plays a key role in early steps of protein N-linked glycosylation by being involved in the conversion of polyprenol into dolichol. Acts as a polyprenal reductase that mediates the reduction of polyprenal into dolichal in a NADP-dependent mechanism. Dolichols are required for the synthesis of dolichol-linked monosaccharides and the oligosaccharide precursor used for N-glycosylation. Involved in the regulation of plant growth and reproductive processes. This Arabidopsis thaliana (Mouse-ear cress) protein is Polyprenal reductase 1.